A 346-amino-acid chain; its full sequence is NADH-ubiquinone oxidoreductase chain 2 (346 aa).

A run of 10 helical transmembrane segments spans residues His-25 to Ser-45, Ala-52 to Phe-72, Cys-95 to Phe-115, Leu-124 to Leu-144, Leu-149 to Gly-169, Ile-178 to Pro-198, Leu-200 to Ala-220, Ala-242 to Pro-262, Glu-274 to Leu-294, and Ala-326 to Leu-346.

This sequence belongs to the complex I subunit 2 family. As to quaternary structure, core subunit of respiratory chain NADH dehydrogenase (Complex I) which is composed of 45 different subunits.

It is found in the mitochondrion inner membrane. The catalysed reaction is a ubiquinone + NADH + 5 H(+)(in) = a ubiquinol + NAD(+) + 4 H(+)(out). Its function is as follows. Core subunit of the mitochondrial membrane respiratory chain NADH dehydrogenase (Complex I) which catalyzes electron transfer from NADH through the respiratory chain, using ubiquinone as an electron acceptor. Essential for the catalytic activity and assembly of complex I. This is NADH-ubiquinone oxidoreductase chain 2 (MT-ND2) from Gallus gallus (Chicken).